Reading from the N-terminus, the 704-residue chain is Elongation factor G (704 aa).

Residues 8-290 (ARYRNIGISA…AVIDYLPSPV (283 aa)) enclose the tr-type G domain. Residues 17-24 (AHIDAGKT), 88-92 (DTPGH), and 142-145 (NKMD) contribute to the GTP site. N6-acetyllysine occurs at positions 504 and 643.

It belongs to the TRAFAC class translation factor GTPase superfamily. Classic translation factor GTPase family. EF-G/EF-2 subfamily.

The protein resides in the cytoplasm. In terms of biological role, catalyzes the GTP-dependent ribosomal translocation step during translation elongation. During this step, the ribosome changes from the pre-translocational (PRE) to the post-translocational (POST) state as the newly formed A-site-bound peptidyl-tRNA and P-site-bound deacylated tRNA move to the P and E sites, respectively. Catalyzes the coordinated movement of the two tRNA molecules, the mRNA and conformational changes in the ribosome. The polypeptide is Elongation factor G (Shigella sonnei (strain Ss046)).